A 376-amino-acid polypeptide reads, in one-letter code: Multiphosphoryl transfer protein (376 aa).

Residues 2 to 142 (FQLSVQDIHP…EELRALLMGE (141 aa)) enclose the PTS EIIA type-2 domain. The active-site Tele-phosphohistidine intermediate; for EIIA activity is the His62. At His62 the chain carries Phosphohistidine; by HPr. The tract at residues 156-284 (TLDVIASSLV…LTSDDALTDD (129 aa)) is m domain. Residues 285 to 375 (VLSAEFVVRN…DAIAAGLGEG (91 aa)) form the HPr domain. His299 acts as the Pros-phosphohistidine intermediate; for HPr activity in catalysis. His299 bears the Phosphohistidine; by EI mark.

It is found in the cytoplasm. In terms of biological role, the phosphoenolpyruvate-dependent sugar phosphotransferase system (sugar PTS), a major carbohydrate active transport system, catalyzes the phosphorylation of incoming sugar substrates concomitantly with their translocation across the cell membrane. The enzyme II FruAB PTS system is involved in fructose transport. The sequence is that of Multiphosphoryl transfer protein (fruB) from Salmonella typhimurium (strain LT2 / SGSC1412 / ATCC 700720).